The primary structure comprises 490 residues: MTSNTGMLPLTPGLGPLAPSIYASNTNNKVLIIDNGGHTLKIATNNPSQPHIIVPNQVGKVKNEKHQIMGEELINYNDPSEVRSRNPMEKGYITNWGLEKEIWDYAFKRDDMKIKPQDYNLLLTEAPNSLDDLRKTMYEVVYEQYKFKSLYLTTSSTLGLVHIKQQLLQYQQQQHQPPLDASMISLLKSPCHLVVDCGYSSTHIIPHFQNTRLNYAIKRFNIGGKLLTNYLKEIVSFRYWDMMHETKLMNTIKEKTCFISKDFIFDIKRSQIDKLNSNLKIDYVLPNYNDPNNKTGYIKENLNNNNNNNDKNDKLNVNIEKDKDNNDIKSKEEGEEIKLNDEIKKDSTTTTNTTKEEDMEQVLSLVNERFTVPELLFNPSDIGMNQAGLAESIVQSINCTNSNLHIPLYSNIILLGGSTLFPGLKERLELELRKLAPEQYNINIFQPQDPILSPLYGGIRLAQQPDYLKYSISKQDYEEYGYNYCNKKFF.

It belongs to the actin family. ARP6 subfamily.

It localises to the cytoplasm. The protein resides in the cytoskeleton. The chain is Actin-related protein 6 from Dictyostelium discoideum (Social amoeba).